The sequence spans 330 residues: 2-keto-3-deoxygluconate permease (330 aa).

A run of 10 helical transmembrane segments spans residues 10–30 (VPGG…TFAP), 42–62 (ALIT…GATI), 77–97 (LLLG…QFIP), 100–120 (GIQS…VMNE), 140–160 (GAFA…TFGV), 163–183 (LAAF…LGCI), 200–220 (PAII…GMLI), 224–244 (LLGI…LFLL), 254–274 (VAGV…YALA), and 289–309 (AIIA…TVWV).

Belongs to the KdgT transporter family.

The protein resides in the cell membrane. The catalysed reaction is 2-dehydro-3-deoxy-D-gluconate(in) + H(+)(in) = 2-dehydro-3-deoxy-D-gluconate(out) + H(+)(out). Its function is as follows. Catalyzes the proton-dependent uptake of 2-keto-3-deoxygluconate (KDG) into the cell. This Bacillus subtilis (strain 168) protein is 2-keto-3-deoxygluconate permease.